The chain runs to 103 residues: Truncated secreted TNF-receptor-like protein A53 (103 aa).

The TNFR-Cys 1 repeat unit spans residues 36–73 (SCDKGEYLDKRHNQCCNRCPPGEFAKVRCNGNDNTKCE). 3 disulfides stabilise this stretch: cysteine 37-cysteine 50, cysteine 51-cysteine 64, and cysteine 54-cysteine 72. One copy of the TNFR-Cys 2; truncated repeat lies at 74 to 103 (RCPPHTYTTIPIILMDVINVENAQQDHLIR).

It belongs to the poxviridae A53R protein family.

This is Truncated secreted TNF-receptor-like protein A53 from Vaccinia virus (strain Copenhagen) (VACV).